Consider the following 337-residue polypeptide: DNA-directed RNA polymerase subunit alpha (337 aa).

Residues 1–233 (MVREEVAGST…DLFLPFLHTE (233 aa)) form an alpha N-terminal domain (alpha-NTD) region. Positions 267-337 (IPLNCIFIDQ…LPMDLPKNKF (71 aa)) are alpha C-terminal domain (alpha-CTD).

The protein belongs to the RNA polymerase alpha chain family. In plastids the minimal PEP RNA polymerase catalytic core is composed of four subunits: alpha, beta, beta', and beta''. When a (nuclear-encoded) sigma factor is associated with the core the holoenzyme is formed, which can initiate transcription.

It is found in the plastid. The protein localises to the chloroplast. The enzyme catalyses RNA(n) + a ribonucleoside 5'-triphosphate = RNA(n+1) + diphosphate. Functionally, DNA-dependent RNA polymerase catalyzes the transcription of DNA into RNA using the four ribonucleoside triphosphates as substrates. The sequence is that of DNA-directed RNA polymerase subunit alpha from Oryza nivara (Indian wild rice).